The following is a 734-amino-acid chain: Elongation factor G, mitochondrial (734 aa).

A mitochondrion-targeting transit peptide spans 1 to 32; the sequence is MTSFLTSRFGGLALRNVMNNKNGINSFGLRCF. The tr-type G domain maps to 38–318; that stretch reads SGLRNIGISA…GVIKYLPSPN (281 aa). GTP contacts are provided by residues 47–54, 114–118, and 168–171; these read AHIDSGKT, DTPGH, and NKLD.

Belongs to the TRAFAC class translation factor GTPase superfamily. Classic translation factor GTPase family. EF-G/EF-2 subfamily.

The protein resides in the mitochondrion. The enzyme catalyses GTP + H2O = GDP + phosphate + H(+). It functions in the pathway protein biosynthesis; polypeptide chain elongation. Mitochondrial GTPase that catalyzes the GTP-dependent ribosomal translocation step during translation elongation. During this step, the ribosome changes from the pre-translocational (PRE) to the post-translocational (POST) state as the newly formed A-site-bound peptidyl-tRNA and P-site-bound deacylated tRNA move to the P and E sites, respectively. Catalyzes the coordinated movement of the two tRNA molecules, the mRNA and conformational changes in the ribosome. This chain is Elongation factor G, mitochondrial (gfm1), found in Dictyostelium discoideum (Social amoeba).